The primary structure comprises 539 residues: Dihydrolipoyllysine-residue acetyltransferase component 3 of pyruvate dehydrogenase complex, mitochondrial (539 aa).

The transit peptide at 1-102 (MAYASRIINH…SCLMQSARGF (102 aa)) directs the protein to the mitochondrion. The 77-residue stretch at 111–187 (HQEIGMPSLS…QVGEVIAITV (77 aa)) folds into the Lipoyl-binding domain. K152 carries the post-translational modification N6-lipoyllysine. Residues 195–247 (KFKDYTPSSTADAAPTKAEPTPAPPKEEKVKQPSSPPEPKASKPSTPPTGDRV) are disordered. Residues 204 to 214 (TADAAPTKAEP) are compositionally biased toward low complexity. A Peripheral subunit-binding (PSBD) domain is found at 248 to 285 (FASPLARKLAEDNNVPLSDIEGTGPEGRIVKADIDEYL). Residues H512 and D516 contribute to the active site.

The protein belongs to the 2-oxoacid dehydrogenase family. It depends on (R)-lipoate as a cofactor.

It is found in the mitochondrion matrix. It catalyses the reaction N(6)-[(R)-dihydrolipoyl]-L-lysyl-[protein] + acetyl-CoA = N(6)-[(R)-S(8)-acetyldihydrolipoyl]-L-lysyl-[protein] + CoA. Functionally, the pyruvate dehydrogenase complex catalyzes the overall conversion of pyruvate to acetyl-CoA and CO(2). It contains multiple copies of three enzymatic components: pyruvate dehydrogenase (E1), dihydrolipoamide acetyltransferase (E2) and lipoamide dehydrogenase (E3). The polypeptide is Dihydrolipoyllysine-residue acetyltransferase component 3 of pyruvate dehydrogenase complex, mitochondrial (Arabidopsis thaliana (Mouse-ear cress)).